The chain runs to 677 residues: Probable potassium transport system protein Kup (677 aa).

12 helical membrane passes run 13 to 33, 54 to 74, 98 to 118, 137 to 157, 171 to 191, 217 to 237, 249 to 269, 296 to 316, 345 to 365, 374 to 394, 402 to 422, and 429 to 449; these read GALI…LYTM, VSLV…IIAL, WLLL…TLTP, FIFP…LLIV, IFGP…LVNI, TGIF…ALYS, VSWI…GAWI, IFGV…LISG, MYIG…VWAF, AYGL…YQFI, ILAF…LIAS, and GGYA…IWFY.

This sequence belongs to the HAK/KUP transporter (TC 2.A.72) family.

Its subcellular location is the cell membrane. The enzyme catalyses K(+)(in) + H(+)(in) = K(+)(out) + H(+)(out). Its function is as follows. Transport of potassium into the cell. Likely operates as a K(+):H(+) symporter. This is Probable potassium transport system protein Kup from Leuconostoc mesenteroides subsp. mesenteroides (strain ATCC 8293 / DSM 20343 / BCRC 11652 / CCM 1803 / JCM 6124 / NCDO 523 / NBRC 100496 / NCIMB 8023 / NCTC 12954 / NRRL B-1118 / 37Y).